Reading from the N-terminus, the 280-residue chain is Ribosomal RNA small subunit methyltransferase A (280 aa).

Positions 28, 30, 55, 77, 103, and 122 each coordinate S-adenosyl-L-methionine.

Belongs to the class I-like SAM-binding methyltransferase superfamily. rRNA adenine N(6)-methyltransferase family. RsmA subfamily.

The protein resides in the cytoplasm. It carries out the reaction adenosine(1518)/adenosine(1519) in 16S rRNA + 4 S-adenosyl-L-methionine = N(6)-dimethyladenosine(1518)/N(6)-dimethyladenosine(1519) in 16S rRNA + 4 S-adenosyl-L-homocysteine + 4 H(+). In terms of biological role, specifically dimethylates two adjacent adenosines (A1518 and A1519) in the loop of a conserved hairpin near the 3'-end of 16S rRNA in the 30S particle. May play a critical role in biogenesis of 30S subunits. This chain is Ribosomal RNA small subunit methyltransferase A, found in Roseobacter denitrificans (strain ATCC 33942 / OCh 114) (Erythrobacter sp. (strain OCh 114)).